We begin with the raw amino-acid sequence, 381 residues long: Homoserine O-succinyltransferase (381 aa).

The AB hydrolase-1 domain maps to 45–360 (NAVLVCHALN…PHGHDAFLLD (316 aa)). The Nucleophile role is filled by Ser-151. Residue Arg-221 coordinates substrate. Active-site residues include Asp-321 and His-354. Residue Asp-355 coordinates substrate.

Belongs to the AB hydrolase superfamily. MetX family. Homodimer.

The protein localises to the cytoplasm. It carries out the reaction L-homoserine + succinyl-CoA = O-succinyl-L-homoserine + CoA. Its pathway is amino-acid biosynthesis; L-methionine biosynthesis via de novo pathway; O-succinyl-L-homoserine from L-homoserine: step 1/1. Its function is as follows. Transfers a succinyl group from succinyl-CoA to L-homoserine, forming succinyl-L-homoserine. In Burkholderia ambifaria (strain ATCC BAA-244 / DSM 16087 / CCUG 44356 / LMG 19182 / AMMD) (Burkholderia cepacia (strain AMMD)), this protein is Homoserine O-succinyltransferase.